Here is a 373-residue protein sequence, read N- to C-terminus: Glutamine synthetase (373 aa).

N-acetylalanine is present on alanine 2. A required for glutamine-induced ubiquitination by CRL4(CRBN) and proteasomal degradation region spans residues 2–25 (ATSASSHLNKGIKQVYMALPQGDK). Lysine 11 and lysine 14 each carry N6-acetyllysine. In terms of domain architecture, GS beta-grasp spans 26–106 (VQAMYIWIDG…VFCEVFKYNR (81 aa)). Tyrosine 104 bears the Phosphotyrosine mark. Residues 113–373 (LRHTCKRIMD…TGDEPFQYKN (261 aa)) enclose the GS catalytic domain. Glutamate 134 contributes to the ATP binding site. Residues glutamate 134, glutamate 136, glutamate 196, and glutamate 203 each contribute to the Mn(2+) site. Residue 203–208 (EFQIGP) coordinates ATP. Residue 246–247 (NW) coordinates L-glutamate. Histidine 253 is a binding site for Mn(2+). ATP-binding positions include 255-257 (NFS), arginine 319, and arginine 324. L-glutamate is bound at residue arginine 319. ADP is bound at residue 336–338 (YFE). Glutamate 338 serves as a coordination point for Mn(2+). Arginine 340 lines the L-glutamate pocket. Residue serine 343 is modified to Phosphoserine.

The protein belongs to the glutamine synthetase family. As to quaternary structure, decamer; composed of two pentamers. Interacts with PALMD. Interacts with RHOJ. Interacts with BEST2; this interaction tethers a fraction of GLUL to the membrane, causing a decrease of cytosolic glutamine synthase (GS) activity and inhibits the chloride channel activity of BEST2 by affecting the gating at the aperture in the absence of intracellular glutamate. Mg(2+) serves as cofactor. It depends on Mn(2+) as a cofactor. In terms of processing, palmitoylated; undergoes autopalmitoylation. Acetylated by EP300/p300; acetylation is stimulated by increased glutamine levels and promotes ubiquitin-mediated proteasomal degradation. Post-translationally, ubiquitinated by ZNRF1. Ubiquitinated by the DCX (DDB1-CUL4-X-box) E3 ubiquitin-protein ligase complex called CRL4(CRBN), leading to proteasomal degradation.

It is found in the cytoplasm. Its subcellular location is the cytosol. It localises to the microsome. The protein resides in the mitochondrion. The protein localises to the cell membrane. The enzyme catalyses L-glutamate + NH4(+) + ATP = L-glutamine + ADP + phosphate + H(+). It carries out the reaction L-cysteinyl-[protein] + hexadecanoyl-CoA = S-hexadecanoyl-L-cysteinyl-[protein] + CoA. Glutamine synthetase activity is inhibited by methionine sulfoximine (MSO). Glutamine synthetase that catalyzes the ATP-dependent conversion of glutamate and ammonia to glutamine. Its role depends on tissue localization: in the brain, it regulates the levels of toxic ammonia and converts neurotoxic glutamate to harmless glutamine, whereas in the liver, it is one of the enzymes responsible for the removal of ammonia. Plays a key role in ammonium detoxification during erythropoiesis: the glutamine synthetase activity is required to remove ammonium generated by porphobilinogen deaminase (HMBS) during heme biosynthesis to prevent ammonium accumulation and oxidative stress. Essential for proliferation of fetal skin fibroblasts. Independently of its glutamine synthetase activity, required for endothelial cell migration during vascular development. Involved in angiogenesis by regulating membrane localization and activation of the GTPase RHOJ, possibly by promoting RHOJ palmitoylation. May act as a palmitoyltransferase for RHOJ: able to autopalmitoylate and then transfer the palmitoyl group to RHOJ. Plays a role in ribosomal 40S subunit biogenesis. Through the interaction with BEST2, inhibits BEST2 channel activity by affecting the gating at the aperture in the absence of intracellular L-glutamate, but sensitizes BEST2 to intracellular L-glutamate, which promotes the opening of BEST2 and thus relieves its inhibitory effect on BEST2. This is Glutamine synthetase from Bos taurus (Bovine).